Here is a 549-residue protein sequence, read N- to C-terminus: Glucose-6-phosphate isomerase (549 aa).

The active-site Proton donor is the Glu-355. Active-site residues include His-386 and Lys-514.

It belongs to the GPI family.

It is found in the cytoplasm. It carries out the reaction alpha-D-glucose 6-phosphate = beta-D-fructose 6-phosphate. It participates in carbohydrate biosynthesis; gluconeogenesis. It functions in the pathway carbohydrate degradation; glycolysis; D-glyceraldehyde 3-phosphate and glycerone phosphate from D-glucose: step 2/4. Its function is as follows. Catalyzes the reversible isomerization of glucose-6-phosphate to fructose-6-phosphate. This Salmonella typhi protein is Glucose-6-phosphate isomerase.